Consider the following 246-residue polypeptide: Protein phosphatase PhpP (246 aa).

Positions 2-240 (EISLLTDVGQ…DNITVALVSM (239 aa)) constitute a PPM-type phosphatase domain. Residues Asp36, Gly37, Asp192, and Asp231 each contribute to the Mn(2+) site.

This sequence belongs to the PP2C family. Interacts with the kinase domain of StkP. Mn(2+) serves as cofactor.

It localises to the cytoplasm. The enzyme catalyses O-phospho-L-seryl-[protein] + H2O = L-seryl-[protein] + phosphate. The catalysed reaction is O-phospho-L-threonyl-[protein] + H2O = L-threonyl-[protein] + phosphate. Phosphatase activity is inhibited by NaF but not by okadaic acid. In terms of biological role, protein phosphatase able to dephosphorylate StkP-P and a phosphothreonine residue in a phosphopeptide synthetic substrate. PhpP and its cognate protein kinase StkP appear to constitute a functional signaling couple in vivo, PhpP's primary role probably being to control phosphorylation levels of StkP and of its targets (which include LocZ, DivIVA and KhpB (also called EloR/Jag)). PhpP thus performs an essential control of StkP activity. Overexpression confers an stkP deletion-like phenotype. The chain is Protein phosphatase PhpP (phpP) from Streptococcus pneumoniae.